A 558-amino-acid polypeptide reads, in one-letter code: Dihydroxy-acid dehydratase (558 aa).

Position 78 (Asp78) interacts with Mg(2+). A [2Fe-2S] cluster-binding site is contributed by Cys119. Mg(2+) contacts are provided by Asp120 and Lys121. Lys121 bears the N6-carboxylysine mark. Cys192 serves as a coordination point for [2Fe-2S] cluster. Glu446 is a binding site for Mg(2+). Catalysis depends on Ser472, which acts as the Proton acceptor.

It belongs to the IlvD/Edd family. In terms of assembly, homodimer. [2Fe-2S] cluster is required as a cofactor. Mg(2+) serves as cofactor.

The catalysed reaction is (2R)-2,3-dihydroxy-3-methylbutanoate = 3-methyl-2-oxobutanoate + H2O. It catalyses the reaction (2R,3R)-2,3-dihydroxy-3-methylpentanoate = (S)-3-methyl-2-oxopentanoate + H2O. Its pathway is amino-acid biosynthesis; L-isoleucine biosynthesis; L-isoleucine from 2-oxobutanoate: step 3/4. It participates in amino-acid biosynthesis; L-valine biosynthesis; L-valine from pyruvate: step 3/4. Functionally, functions in the biosynthesis of branched-chain amino acids. Catalyzes the dehydration of (2R,3R)-2,3-dihydroxy-3-methylpentanoate (2,3-dihydroxy-3-methylvalerate) into 2-oxo-3-methylpentanoate (2-oxo-3-methylvalerate) and of (2R)-2,3-dihydroxy-3-methylbutanoate (2,3-dihydroxyisovalerate) into 2-oxo-3-methylbutanoate (2-oxoisovalerate), the penultimate precursor to L-isoleucine and L-valine, respectively. This is Dihydroxy-acid dehydratase from Campylobacter jejuni subsp. jejuni serotype O:2 (strain ATCC 700819 / NCTC 11168).